The following is a 324-amino-acid chain: Annexin A10 (324 aa).

4 Annexin repeats span residues 17–88 (FNPI…GLMY), 89–160 (PPPL…NLVQ), 171–243 (AMAA…AIVL), and 247–318 (DKPA…AICA).

Belongs to the annexin family.

This is Annexin A10 (ANXA10) from Homo sapiens (Human).